A 129-amino-acid chain; its full sequence is Tumor necrosis factor receptor superfamily member 12A (129 aa).

The N-terminal stretch at 1-27 is a signal peptide; sequence MASAWPRSLPQILVLGFGLVLMRAAAG. Residues 28-80 are Extracellular-facing; the sequence is EQAPGTSPCSSGSSWSADLDKCMDCASCPARPHSDFCLGCAAAPPAHFRLLWP. Cystine bridges form between Cys36-Cys49, Cys52-Cys67, and Cys55-Cys64. A TNFR-Cys; atypical repeat occupies 36-67; that stretch reads CSSGSSWSADLDKCMDCASCPARPHSDFCLGC. The helical transmembrane segment at 81 to 101 threads the bilayer; the sequence is ILGGALSLVLVLALVSSFLVW. Topologically, residues 102–129 are cytoplasmic; it reads RRCRRREKFTTPIEETGGEGCPGVALIQ.

As to quaternary structure, associates with TRAF1 and TRAF2, and probably also with TRAF3. In terms of tissue distribution, highly expressed in fetal heart, intestine, kidney, liver, lung and skin, and in adult heart and ovary. Intermediate expression in adult kidney, lung and skin.

The protein resides in the membrane. Functionally, receptor for TNFSF12/TWEAK. Weak inducer of apoptosis in some cell types. Promotes angiogenesis and the proliferation of endothelial cells. May modulate cellular adhesion to matrix proteins. The chain is Tumor necrosis factor receptor superfamily member 12A (Tnfrsf12a) from Mus musculus (Mouse).